The sequence spans 90 residues: Phosphoribosyl-ATP pyrophosphatase (90 aa).

It belongs to the PRA-PH family.

The protein resides in the cytoplasm. It catalyses the reaction 1-(5-phospho-beta-D-ribosyl)-ATP + H2O = 1-(5-phospho-beta-D-ribosyl)-5'-AMP + diphosphate + H(+). The protein operates within amino-acid biosynthesis; L-histidine biosynthesis; L-histidine from 5-phospho-alpha-D-ribose 1-diphosphate: step 2/9. This is Phosphoribosyl-ATP pyrophosphatase from Streptomyces griseus subsp. griseus (strain JCM 4626 / CBS 651.72 / NBRC 13350 / KCC S-0626 / ISP 5235).